The chain runs to 294 residues: MNDIKQLLWNGELNVLVSIDPSFLMKGSPREIAVLRIRVPRETYLVNYMPFIWNKIKSFLSFDPLTDSEKYFWFEHNKTPIPWNYPVGVLFDCLAGKSATFTTSFENQVKDVLTFLRIHLVMGDSLPPTIIPIASSKTQAEKFWFHQWKQVCFILNGSSKAIMSLSVNEARKFWGSVITRNFQDFIEISNKISSSRPRHIPLIIQTSRTSGTFRISQPTISMTGVNPTLKDIEGDILDVKEGINGNDVMVICQGIEIPWHMLLYDLYSKLRSFDGFLYITLVPIKGGDKASSEL.

Lys-149 participates in a covalent cross-link: Glycyl lysine isopeptide (Lys-Gly) (interchain with G-Cter in ATG12).

The protein belongs to the ATG5 family. Conjugated with ATG12. The ATG5-ATG12 conjugate forms a complex with several units of ATG16. The ATG12-ATG5 conjugate also associates with ATG3. Post-translationally, conjugated to ATG12; which is essential for autophagy. Conjugation with ATG12 involves ATG7 as an E1-like activating enzyme and ATG10 as an E2-like conjugating enzyme.

It is found in the preautophagosomal structure membrane. In terms of biological role, involved in cytoplasm to vacuole transport (Cvt) and autophagic vesicle formation. Autophagy is essential for maintenance of amino acid levels and protein synthesis under nitrogen starvation. Required for selective autophagic degradation of the nucleus (nucleophagy). Also required for mitophagy, which eliminates defective or superfluous mitochondria in order to fulfill cellular energy requirements and prevent excess ROS production. Conjugation with ATG12, through a ubiquitin-like conjugating system involving ATG7 as an E1-like activating enzyme and ATG10 as an E2-like conjugating enzyme, is essential for its function. The ATG12-ATG5 conjugate acts as an E3-like enzyme which is required for lipidation of ATG8 and ATG8 association to the vesicle membranes. ATG12-ATG5 rearranges the ATG3 catalytic center and enhances its E2 activity. Plays a role in the regulation of filamentous growth and chronological longevity. The polypeptide is Autophagy protein 5 (ATG5) (Saccharomyces cerevisiae (strain YJM789) (Baker's yeast)).